A 281-amino-acid chain; its full sequence is Ribosomal RNA small subunit methyltransferase A (281 aa).

Positions 36, 38, 63, 84, 109, and 127 each coordinate S-adenosyl-L-methionine.

Belongs to the class I-like SAM-binding methyltransferase superfamily. rRNA adenine N(6)-methyltransferase family. RsmA subfamily.

The protein resides in the cytoplasm. It catalyses the reaction adenosine(1518)/adenosine(1519) in 16S rRNA + 4 S-adenosyl-L-methionine = N(6)-dimethyladenosine(1518)/N(6)-dimethyladenosine(1519) in 16S rRNA + 4 S-adenosyl-L-homocysteine + 4 H(+). Functionally, specifically dimethylates two adjacent adenosines (A1518 and A1519) in the loop of a conserved hairpin near the 3'-end of 16S rRNA in the 30S particle. May play a critical role in biogenesis of 30S subunits. This chain is Ribosomal RNA small subunit methyltransferase A, found in Borreliella burgdorferi (strain ATCC 35210 / DSM 4680 / CIP 102532 / B31) (Borrelia burgdorferi).